The following is a 368-amino-acid chain: tRNA-specific 2-thiouridylase MnmA (368 aa).

ATP-binding positions include 12 to 19 and methionine 38; that span reads GMSGGVDS. The tract at residues 98–100 is interaction with target base in tRNA; that stretch reads NPD. The Nucleophile role is filled by cysteine 103. An intrachain disulfide couples cysteine 103 to cysteine 200. Glycine 128 contributes to the ATP binding site. The interaction with tRNA stretch occupies residues 150-152; the sequence is KDQ. Cysteine 200 serves as the catalytic Cysteine persulfide intermediate. The segment at 313–314 is interaction with tRNA; that stretch reads RY.

Belongs to the MnmA/TRMU family. As to quaternary structure, interacts with TusE.

The protein localises to the cytoplasm. It catalyses the reaction S-sulfanyl-L-cysteinyl-[protein] + uridine(34) in tRNA + AH2 + ATP = 2-thiouridine(34) in tRNA + L-cysteinyl-[protein] + A + AMP + diphosphate + H(+). Its function is as follows. Catalyzes the 2-thiolation of uridine at the wobble position (U34) of tRNA(Lys), tRNA(Glu) and tRNA(Gln), leading to the formation of s(2)U34, the first step of tRNA-mnm(5)s(2)U34 synthesis. Sulfur is provided by IscS, via a sulfur-relay system. Binds ATP and its substrate tRNAs. The sequence is that of tRNA-specific 2-thiouridylase MnmA from Pectobacterium carotovorum subsp. carotovorum (strain PC1).